We begin with the raw amino-acid sequence, 151 residues long: SsrA-binding protein (151 aa).

Belongs to the SmpB family.

The protein localises to the cytoplasm. Required for rescue of stalled ribosomes mediated by trans-translation. Binds to transfer-messenger RNA (tmRNA), required for stable association of tmRNA with ribosomes. tmRNA and SmpB together mimic tRNA shape, replacing the anticodon stem-loop with SmpB. tmRNA is encoded by the ssrA gene; the 2 termini fold to resemble tRNA(Ala) and it encodes a 'tag peptide', a short internal open reading frame. During trans-translation Ala-aminoacylated tmRNA acts like a tRNA, entering the A-site of stalled ribosomes, displacing the stalled mRNA. The ribosome then switches to translate the ORF on the tmRNA; the nascent peptide is terminated with the 'tag peptide' encoded by the tmRNA and targeted for degradation. The ribosome is freed to recommence translation, which seems to be the essential function of trans-translation. In Chlamydia pneumoniae (Chlamydophila pneumoniae), this protein is SsrA-binding protein.